The primary structure comprises 645 residues: MDQIKIKFPDGNTKEFDKGTTTEDIAQSISPGLRKKAVAGKLNGQLIDLTRPIESDGDIEIVTPGSDEALEVLRHSTAHLMAQALKRLYGEVHFGVGPVIEGGFYYDFDMEESISSDDFEKIEKTMKQIANENYPIERKVVSRNEAKAFFSDDPYKQELIDAIPEDENVTLYTQGEFTDLCRGVHVPSTSKIKEFKLLSTAGAYWRGDSNNKMLQRIYGTAFFDKKDLKAHLQMLEERKERDHRKIGKELELFSNNPLVGAGLPLWLPNGATIRREIERYIVDKEVSMGYDHVYTPVMANVDLYKTSGHWDHYQEDMFPTMKLDEYEEMVLRPMNCPHHMMIYANKPHSYRELPIRIAELGTMHRYEASGAVSGLQRVRGMTLNDAHIFVRPDQIKEEFKRVVNLIIDVYNDFNFENYSFRLSYRDPEDKEKYFDDDEMWIKAESMLKEAVDELGLDYEEAIGEAAFYGPKLDVQVQTAMGKEETLSTAQLDFLLPQKFELTYIGNDGEQHRPVVIHRGVVSTMERFVAFLTEETKGAFPTWLAPKQVEIIPVNVDLHYDYARLIQDELKSQGVRVEIDDRNEKMGYKIREAQMQKIPYQLVVGDKEVENKEVNVRKYGSQDQETLEKDEFIWNLVDEIRLKKQR.

A TGS domain is found at 1 to 63 (MDQIKIKFPD…ESDGDIEIVT (63 aa)). The catalytic stretch occupies residues 242 to 540 (DHRKIGKELE…LTEETKGAFP (299 aa)). Zn(2+)-binding residues include cysteine 336, histidine 387, and histidine 517.

Belongs to the class-II aminoacyl-tRNA synthetase family. Homodimer. Requires Zn(2+) as cofactor.

Its subcellular location is the cytoplasm. The enzyme catalyses tRNA(Thr) + L-threonine + ATP = L-threonyl-tRNA(Thr) + AMP + diphosphate + H(+). Its function is as follows. Catalyzes the attachment of threonine to tRNA(Thr) in a two-step reaction: L-threonine is first activated by ATP to form Thr-AMP and then transferred to the acceptor end of tRNA(Thr). Also edits incorrectly charged L-seryl-tRNA(Thr). This is Threonine--tRNA ligase from Staphylococcus saprophyticus subsp. saprophyticus (strain ATCC 15305 / DSM 20229 / NCIMB 8711 / NCTC 7292 / S-41).